We begin with the raw amino-acid sequence, 136 residues long: Protein PsiE (136 aa).

4 consecutive transmembrane segments (helical) span residues 15–35 (ILQTVLNLGLLCLGLILVVFL), 55–75 (YELVEGLVVYFLYFEFIALIV), 82–102 (FHFPLRYFVYIGITAIVRLII), and 108–128 (PLDVLIYSAAILLLVITLWLC).

It belongs to the PsiE family.

Its subcellular location is the cell inner membrane. The polypeptide is Protein PsiE (Escherichia coli O17:K52:H18 (strain UMN026 / ExPEC)).